Here is a 465-residue protein sequence, read N- to C-terminus: Cysteine--tRNA ligase (465 aa).

Cys-29 is a binding site for Zn(2+). Positions 31–41 (PTVYNYIHIGN) match the 'HIGH' region motif. Zn(2+)-binding residues include Cys-209, His-234, and Glu-238. Residues 266-270 (KMSKS) carry the 'KMSKS' region motif. ATP is bound at residue Lys-269. Ser-270 is subject to Phosphoserine.

The protein belongs to the class-I aminoacyl-tRNA synthetase family. Monomer. Zn(2+) serves as cofactor.

The protein localises to the cytoplasm. The catalysed reaction is tRNA(Cys) + L-cysteine + ATP = L-cysteinyl-tRNA(Cys) + AMP + diphosphate. The sequence is that of Cysteine--tRNA ligase from Bacillus cytotoxicus (strain DSM 22905 / CIP 110041 / 391-98 / NVH 391-98).